We begin with the raw amino-acid sequence, 151 residues long: MATKPDSRISWLQLLQRGQHYMKTWPAEKQLAPVFPENRVARATRFGIRIMPPLAVFTLTWQIALGGQLGPAIATALFACSLPLQGLWWLGRRSVTPLPPTLAQWFHEIRHKLLESGQALAPLEEAPTYQSLADVLKRAFSQLDKTFLDDL.

2 helical membrane-spanning segments follow: residues 46–66 (FGIR…IALG) and 69–89 (LGPA…GLWW).

The protein belongs to the UPF0208 family.

The protein resides in the cell inner membrane. This chain is UPF0208 membrane protein PC1_2779, found in Pectobacterium carotovorum subsp. carotovorum (strain PC1).